The chain runs to 350 residues: CMP-N-acetylneuraminate-beta-galactosamide-alpha-2,3-sialyltransferase 2 (350 aa).

The Cytoplasmic portion of the chain corresponds to 1–6 (MKCSLR). Residues 7-27 (VWFLSMAFLLVFIMSLLFTYS) form a helical; Signal-anchor for type II membrane protein membrane-spanning segment. Over 28–350 (HHSMATLPYL…ASKIEVYRGN (323 aa)) the chain is Lumenal. 3 cysteine pairs are disulfide-bonded: Cys-70–Cys-75, Cys-72–Cys-149, and Cys-152–Cys-291. Gln-116, Asn-157, and Asn-180 together coordinate substrate. Residue Asn-211 is glycosylated (N-linked (GlcNAc...) asparagine). Substrate-binding residues include Tyr-240, Tyr-276, Gly-280, Gly-300, His-309, and His-326.

Belongs to the glycosyltransferase 29 family. As to quaternary structure, homodimer; disulfide-linked. Homodimer formation occurs in the endoplasmic reticulum. The soluble form derives from the membrane form by proteolytic processing. In terms of processing, N-glycosylated; necessary for proper exit from endoplasmic reticulum and trafficking to the Golgi apparatus. In terms of tissue distribution, strongly expressed in brain and liver and to a lesser extent in heart and kidney. Scarcely detectable in lung, pancreas, spleen and submaxillary gland. Expressed in L5 dorsal root ganglion (DRG) neurons (at protein level).

It localises to the golgi apparatus. The protein localises to the golgi stack membrane. Its subcellular location is the secreted. The enzyme catalyses a beta-D-galactosyl-(1-&gt;3)-N-acetyl-alpha-D-galactosaminyl derivative + CMP-N-acetyl-beta-neuraminate = an N-acetyl-alpha-neuraminyl-(2-&gt;3)-beta-D-galactosyl-(1-&gt;3)-N-acetyl-alpha-D-galactosaminyl derivative + CMP + H(+). It carries out the reaction a ganglioside GM1 (d18:1(4E)) + CMP-N-acetyl-beta-neuraminate = a ganglioside GD1a (d18:1(4E)) + CMP + H(+). It catalyses the reaction ganglioside GM1 (d18:1(4E)/18:0) + CMP-N-acetyl-beta-neuraminate = ganglioside GD1a (18:1(4E)/18:0) + CMP + H(+). The catalysed reaction is a ganglioside GA1 + CMP-N-acetyl-beta-neuraminate = a ganglioside GM1b + CMP + H(+). The enzyme catalyses a ganglioside GA1 (d18:1(4E)) + CMP-N-acetyl-beta-neuraminate = a ganglioside GM1b (d18:1(4E)) + CMP + H(+). It carries out the reaction a ganglioside GD1b + CMP-N-acetyl-beta-neuraminate = a ganglioside GT1b + CMP + H(+). It catalyses the reaction a ganglioside GD1b (d18:1(4E)) + CMP-N-acetyl-beta-neuraminate = a ganglioside GT1b (d18:1(4E)) + CMP + H(+). The catalysed reaction is a globoside GalGb4Cer + CMP-N-acetyl-beta-neuraminate = a globoside MSGG + CMP + H(+). It functions in the pathway protein modification; protein glycosylation. It participates in glycolipid biosynthesis. Functionally, a beta-galactoside alpha2-3 sialyltransferase primarily involved in terminal sialylation of ganglio and globo series glycolipids. Catalyzes the transfer of sialic acid (N-acetyl-neuraminic acid; Neu5Ac) from the nucleotide sugar donor CMP-Neu5Ac onto acceptor Galbeta-(1-&gt;3)-GalNAc-terminated glycoconjugates through an alpha2-3 linkage. Sialylates GM1/GM1a, GA1/asialo-GM1 and GD1b gangliosides to form GD1a, GM1b and GT1b, respectively. Together with ST3GAL3, primarily responsible for biosynthesis of brain GD1a and GT1b that function as ligands for myelin-associated glycoprotein MAG on axons, regulating MAG expression and axonal myelin stability and regeneration. Via GT1b regulates TLR2 signaling in spinal cord microglia in response to nerve injury. Responsible for the sialylation of the pluripotent stem cell- and cancer stem cell-associated antigen SSEA3, forming SSEA4. Sialylates with low efficiency asialofetuin, presumably onto O-glycosidically linked Galbeta-(1-&gt;3)-GalNAc-O-Ser. The sequence is that of CMP-N-acetylneuraminate-beta-galactosamide-alpha-2,3-sialyltransferase 2 from Mus musculus (Mouse).